A 455-amino-acid chain; its full sequence is L-serine dehydratase (455 aa).

It belongs to the iron-sulfur dependent L-serine dehydratase family. Requires [4Fe-4S] cluster as cofactor.

The enzyme catalyses L-serine = pyruvate + NH4(+). It functions in the pathway carbohydrate biosynthesis; gluconeogenesis. The protein is L-serine dehydratase (sdaA) of Helicobacter pylori (strain ATCC 700392 / 26695) (Campylobacter pylori).